Consider the following 382-residue polypeptide: Mannitol-1-phosphate 5-dehydrogenase (382 aa).

Ala3–Gly14 is a binding site for NAD(+). At Lys269 the chain carries N6-acetyllysine.

It belongs to the mannitol dehydrogenase family.

It carries out the reaction D-mannitol 1-phosphate + NAD(+) = beta-D-fructose 6-phosphate + NADH + H(+). The sequence is that of Mannitol-1-phosphate 5-dehydrogenase from Shigella boydii serotype 18 (strain CDC 3083-94 / BS512).